An 885-amino-acid chain; its full sequence is Dual serine/threonine and tyrosine protein kinase (885 aa).

The Protein kinase domain maps to 614–868 (PKLGRELGRG…PLLGIVQPGL (255 aa)). Residues 620-628 (LGRGQYGVV) and lysine 643 each bind ATP. The Proton acceptor role is filled by aspartate 739.

This sequence belongs to the protein kinase superfamily. Ser/Thr protein kinase family.

It localises to the cytoplasm. The protein localises to the cell membrane. Its subcellular location is the apical cell membrane. It is found in the basolateral cell membrane. The protein resides in the cell junction. It carries out the reaction L-seryl-[protein] + ATP = O-phospho-L-seryl-[protein] + ADP + H(+). The catalysed reaction is L-threonyl-[protein] + ATP = O-phospho-L-threonyl-[protein] + ADP + H(+). It catalyses the reaction L-tyrosyl-[protein] + ATP = O-phospho-L-tyrosyl-[protein] + ADP + H(+). May act as a positive regulator of ERK phosphorylation downstream of fibroblast growth factor-receptor activation. May induce both caspase-dependent apoptosis and caspase-independent cell death. Plays a role in the embryonic development. The protein is Dual serine/threonine and tyrosine protein kinase (dstyk) of Danio rerio (Zebrafish).